We begin with the raw amino-acid sequence, 654 residues long: tRNA 5-methylaminomethyl-2-thiouridine biosynthesis bifunctional protein MnmC (654 aa).

The interval 1–235 (MSDFQHAQLD…KREMLGGTYQ (235 aa)) is tRNA (mnm(5)s(2)U34)-methyltransferase. The segment at 261 to 654 (VGGGLAGCAS…LRDLVRGQRG (394 aa)) is FAD-dependent cmnm(5)s(2)U34 oxidoreductase.

The protein in the N-terminal section; belongs to the methyltransferase superfamily. tRNA (mnm(5)s(2)U34)-methyltransferase family. In the C-terminal section; belongs to the DAO family. FAD serves as cofactor.

The protein resides in the cytoplasm. The catalysed reaction is 5-aminomethyl-2-thiouridine(34) in tRNA + S-adenosyl-L-methionine = 5-methylaminomethyl-2-thiouridine(34) in tRNA + S-adenosyl-L-homocysteine + H(+). Its function is as follows. Catalyzes the last two steps in the biosynthesis of 5-methylaminomethyl-2-thiouridine (mnm(5)s(2)U) at the wobble position (U34) in tRNA. Catalyzes the FAD-dependent demodification of cmnm(5)s(2)U34 to nm(5)s(2)U34, followed by the transfer of a methyl group from S-adenosyl-L-methionine to nm(5)s(2)U34, to form mnm(5)s(2)U34. This Pseudomonas aeruginosa (strain UCBPP-PA14) protein is tRNA 5-methylaminomethyl-2-thiouridine biosynthesis bifunctional protein MnmC.